The primary structure comprises 243 residues: Protein IN2-1 (243 aa).

The tract at residues 1-26 (MAAAAGPSSSVKESLPPALGSTSQPP) is disordered. Residues 31-112 (GTTRLYICYF…YIDSNFDGPA (82 aa)) form the GST N-terminal domain. Glutathione is bound by residues lysine 70, valine 84, and 96–97 (ES). In terms of domain architecture, GST C-terminal spans 109-240 (DGPALLPEDA…FLLDLAKSHL (132 aa)).

This sequence belongs to the GST superfamily. HSP26 family. As to expression, leaves and roots. It is more strongly induced in the leaves relative to the roots.

This is Protein IN2-1 (IN2-1) from Zea mays (Maize).